We begin with the raw amino-acid sequence, 176 residues long: Calcineurin subunit B type 2 (176 aa).

The N-myristoyl glycine moiety is linked to residue glycine 2. EF-hand domains are found at residues 18-53 (DEIKRLGRSFKKMDLDKSGSLSVDEFMSLPELQQNP), 57-85 (RVIDIFDTDGNGEVDFREFIVGTSQFSVK), 87-122 (DEEQKLRFAFRIYDMDNDGFISNGELFQVLKMMVGN), and 128-163 (QLQQLVDKSILVLDKDGDGRISFEEFRDVVRTMEIH). Residues aspartate 31, aspartate 33, serine 35, serine 37, glutamate 42, aspartate 63, aspartate 65, asparagine 67, glutamate 69, glutamate 74, aspartate 100, aspartate 102, aspartate 104, and glutamate 111 each coordinate Ca(2+). The interval 131–136 (QLVDKS) is calcineurin A binding. Ca(2+) contacts are provided by aspartate 141, aspartate 143, aspartate 145, arginine 147, and glutamate 152.

Belongs to the calcineurin regulatory subunit family. As to quaternary structure, forms a complex composed of a calmodulin-dependent catalytic subunit (also known as calcineurin A) and a regulatory Ca(2+)-binding subunit (also known as calcineurin B). There are three catalytic subunits, each encoded by a separate gene (PPP3CA, PPP3CB, and PPP3CC) and two regulatory subunits which are also encoded by separate genes (PPP3R1 and PPP3R2). Interacts with SPATA33 (via PQIIIT motif). Testis specific.

Its subcellular location is the mitochondrion. Functionally, regulatory subunit of calcineurin, a calcium-dependent, calmodulin stimulated protein phosphatase. Confers calcium sensitivity. This Rattus norvegicus (Rat) protein is Calcineurin subunit B type 2 (Ppp3r2).